The primary structure comprises 90 residues: Non-structural protein NS-S (90 aa).

This sequence belongs to the hantavirus NS-S protein family.

It localises to the host cytoplasm. The protein resides in the host perinuclear region. Functionally, antagonizes host type-I IFN signaling pathway. The polypeptide is Non-structural protein NS-S (N) (Homo sapiens (Human)).